The following is a 1412-amino-acid chain: ABC transporter C family member 3 (1412 aa).

The disordered stretch occupies residues Met1–Lys34. The span at Lys21 to Lys34 shows a compositional bias: basic residues. 6 helical membrane passes run Phe115 to Val135, Met161 to Tyr181, Val236 to Leu256, Ile261 to Ile281, Ala346 to Ser366, and Ile379 to Ile399. The region spanning Phe119–Gln405 is the ABC transmembrane type-1 1 domain. An ABC transporter 1 domain is found at Ile439–Ala662. Gly474–Ser481 provides a ligand contact to ATP. The next 5 helical transmembrane spans lie at Trp724–Met744, Ile787–Phe807, Asn854–Leu874, Ile875–Phe895, and Trp967–Ile987. The ABC transmembrane type-1 2 domain maps to Phe735–Thr1025. The ABC transporter 2 domain occupies Ile1062–Glu1296. An ATP-binding site is contributed by Gly1096–Ser1103. The disordered stretch occupies residues Gly1316–Asn1412. A compositionally biased stretch (polar residues) spans Asn1342–Leu1351. Over residues Asp1367–Asp1397 the composition is skewed to low complexity. The span at Asn1398–Asn1412 shows a compositional bias: acidic residues.

It belongs to the ABC transporter superfamily. ABCC family. Conjugate transporter (TC 3.A.1.208) subfamily.

It is found in the membrane. This Dictyostelium discoideum (Social amoeba) protein is ABC transporter C family member 3 (abcC3).